The primary structure comprises 85 residues: CRISPR-associated endoribonuclease Cas2 (85 aa).

Position 8 (Asp-8) interacts with Mg(2+).

It belongs to the CRISPR-associated endoribonuclease Cas2 protein family. As to quaternary structure, homodimer, forms a heterotetramer with a Cas1 homodimer. Mg(2+) serves as cofactor.

Functionally, CRISPR (clustered regularly interspaced short palindromic repeat), is an adaptive immune system that provides protection against mobile genetic elements (viruses, transposable elements and conjugative plasmids). CRISPR clusters contain sequences complementary to antecedent mobile elements and target invading nucleic acids. CRISPR clusters are transcribed and processed into CRISPR RNA (crRNA). Functions as a ssRNA-specific endoribonuclease. Involved in the integration of spacer DNA into the CRISPR cassette. This is CRISPR-associated endoribonuclease Cas2 from Thermococcus kodakarensis (strain ATCC BAA-918 / JCM 12380 / KOD1) (Pyrococcus kodakaraensis (strain KOD1)).